A 199-amino-acid chain; its full sequence is UPF0637 protein LVIS_1261 (199 aa).

The protein belongs to the UPF0637 family.

The chain is UPF0637 protein LVIS_1261 from Levilactobacillus brevis (strain ATCC 367 / BCRC 12310 / CIP 105137 / JCM 1170 / LMG 11437 / NCIMB 947 / NCTC 947) (Lactobacillus brevis).